Reading from the N-terminus, the 449-residue chain is Ribulose bisphosphate carboxylase large chain (449 aa).

A propeptide spanning residues 1 to 2 is cleaved from the precursor; it reads MS. Proline 3 is subject to N-acetylproline. Lysine 14 carries the post-translational modification N6,N6,N6-trimethyllysine. Substrate contacts are provided by asparagine 123 and threonine 173. The active-site Proton acceptor is lysine 175. Lysine 177 provides a ligand contact to substrate. Positions 201, 203, and 204 each coordinate Mg(2+). Position 201 is an N6-carboxylysine (lysine 201). The Proton acceptor role is filled by histidine 294. 3 residues coordinate substrate: residue 295, histidine 327, and serine 379.

This sequence belongs to the RuBisCO large chain family. Type I subfamily. In terms of assembly, heterohexadecamer of 8 large chains and 8 small chains; disulfide-linked. The disulfide link is formed within the large subunit homodimers. It depends on Mg(2+) as a cofactor. Post-translationally, the disulfide bond which can form in the large chain dimeric partners within the hexadecamer appears to be associated with oxidative stress and protein turnover.

Its subcellular location is the plastid. It is found in the chloroplast. It carries out the reaction 2 (2R)-3-phosphoglycerate + 2 H(+) = D-ribulose 1,5-bisphosphate + CO2 + H2O. The enzyme catalyses D-ribulose 1,5-bisphosphate + O2 = 2-phosphoglycolate + (2R)-3-phosphoglycerate + 2 H(+). In terms of biological role, ruBisCO catalyzes two reactions: the carboxylation of D-ribulose 1,5-bisphosphate, the primary event in carbon dioxide fixation, as well as the oxidative fragmentation of the pentose substrate in the photorespiration process. Both reactions occur simultaneously and in competition at the same active site. This is Ribulose bisphosphate carboxylase large chain from Salacia pallescens.